The following is a 144-amino-acid chain: Maximins 4/H3 type 2 (144 aa).

The first 18 residues, 1-18 (MNFKYIIAVSFFIASAYA), serve as a signal peptide directing secretion. Residues 19-43 (RRNEKDVQSLSQRDVLEEESLREIR) constitute a propeptide that is removed on maturation. Asparagine amide is present on Asn70. Residues 74–123 (TAEDHEVMKRLEAVMRDLDSLDHPEEASERETRGFNQEEIANLFTKKEKR) constitute a propeptide that is removed on maturation. An Isoleucine amide modification is found at Ile143.

It belongs to the bombinin family. As to expression, expressed by the skin glands.

The protein localises to the secreted. Its function is as follows. Maximin-4 shows antibacterial activity against both Gram-positive and Gram-negative bacteria. It also shows antimicrobial activity against the fungus C.albicans, but not against A.flavus nor P.uticale. It has little hemolytic activity. It does not possess a significant cytotoxicity against tumor cell lines. It does not possess a significant anti-HIV activity. Maximin-H3 shows antibacterial activity against both Gram-positive and Gram-negative bacteria. It also shows antimicrobial activity against the fungus C.albicans. Shows strong hemolytic activity. The chain is Maximins 4/H3 type 2 from Bombina maxima (Giant fire-bellied toad).